Here is an 87-residue protein sequence, read N- to C-terminus: HssA/B-like protein 31 (87 aa).

It belongs to the hssA/B family.

The polypeptide is HssA/B-like protein 31 (hssl31) (Dictyostelium discoideum (Social amoeba)).